The following is a 238-amino-acid chain: Enolase-phosphatase E1 (238 aa).

Belongs to the HAD-like hydrolase superfamily. MasA/MtnC family. Monomer. It depends on Mg(2+) as a cofactor.

It catalyses the reaction 5-methylsulfanyl-2,3-dioxopentyl phosphate + H2O = 1,2-dihydroxy-5-(methylsulfanyl)pent-1-en-3-one + phosphate. It participates in amino-acid biosynthesis; L-methionine biosynthesis via salvage pathway; L-methionine from S-methyl-5-thio-alpha-D-ribose 1-phosphate: step 3/6. The protein operates within amino-acid biosynthesis; L-methionine biosynthesis via salvage pathway; L-methionine from S-methyl-5-thio-alpha-D-ribose 1-phosphate: step 4/6. In terms of biological role, bifunctional enzyme that catalyzes the enolization of 2,3-diketo-5-methylthiopentyl-1-phosphate (DK-MTP-1-P) into the intermediate 2-hydroxy-3-keto-5-methylthiopentenyl-1-phosphate (HK-MTPenyl-1-P), which is then dephosphorylated to form the acireductone 1,2-dihydroxy-3-keto-5-methylthiopentene (DHK-MTPene). The polypeptide is Enolase-phosphatase E1 (Synechococcus elongatus (strain ATCC 33912 / PCC 7942 / FACHB-805) (Anacystis nidulans R2)).